A 2266-amino-acid chain; its full sequence is Protein ELYS (2266 aa).

Positions 1-494 (MRDLRAQVTS…SGVVHLTCTG (494 aa)) are seven-bladed beta propeller repeats. The interval 1–981 (MRDLRAQVTS…QTLKINVMND (981 aa)) is necessary for cytoplasmic localization. Phosphoserine occurs at positions 509, 528, 1080, 1138, 1142, 1150, 1153, 1155, and 1160. The tract at residues 591–1092 (VVLTKEEFDR…IEEPSPIVYS (502 aa)) is important for nuclear localization. Positions 1019-2266 (YHLSTSSVFR…PKQILRRKML (1248 aa)) are disordered. The interval 1149 to 2266 (RSLPSSSQLK…PKQILRRKML (1118 aa)) is necessary for nuclear localization. A Phosphothreonine modification is found at Thr1175. Phosphoserine occurs at positions 1214, 1218, 1222, 1232, and 1250. Phosphothreonine is present on Thr1257. A phosphoserine mark is found at Ser1283 and Ser1297. Composition is skewed to polar residues over residues 1305–1320 (KGNS…TTLE) and 1335–1353 (FTAS…NVTE). Position 1369 is a phosphothreonine (Thr1369). A phosphoserine mark is found at Ser1371 and Ser1513. Positions 1446–1698 (RANDNKSMAD…MEQSIHETIP (253 aa)) are mediates transcriptional activity. Thr1517 bears the Phosphothreonine mark. Residues Ser1533, Ser1541, Ser1729, and Ser1806 each carry the phosphoserine modification. Composition is skewed to polar residues over residues 1796 to 1808 (LSQN…NSVT) and 1822 to 1838 (ILEN…ITTG). Thr1808 carries the phosphothreonine modification. Residues 1842–2266 (KRLKSSQLLE…PKQILRRKML (425 aa)) form an important for nuclear localization and chromatin binding region. Phosphoserine is present on residues Ser1878, Ser1884, and Ser1898. Over residues 1908–1919 (STNLDASENTGN) the composition is skewed to polar residues. 2 stretches are compositionally biased toward basic and acidic residues: residues 1920–1930 (KQDDKSSDKQL) and 1940–1952 (GREV…REDS). Ser1944 and Ser1946 each carry phosphoserine. The a.T hook DNA-binding region spans 1971–1983 (PRKRGRPRKINPS). Basic and acidic residues predominate over residues 1986 to 2004 (VGSKAVKEERSPKKKEAPS). A phosphoserine mark is found at Ser1996, Ser2043, Ser2044, and Ser2060. The segment covering 2064-2084 (VSEERTDEMTHKETNEQEERL) has biased composition (basic and acidic residues). Phosphoserine occurs at positions 2089, 2120, 2123, and 2154. A compositionally biased stretch (basic and acidic residues) spans 2169-2179 (NKLEDELKDDA). Residues 2188–2197 (PKAKRIRTSK) are compositionally biased toward basic residues. Phosphoserine is present on residues Ser2212, Ser2222, and Ser2226.

This sequence belongs to the ELYS family. As to quaternary structure, associates with the Nup107-160 subcomplex of the NPC.

The protein resides in the cytoplasm. Its subcellular location is the nucleus. The protein localises to the nucleus envelope. It is found in the nucleus matrix. It localises to the chromosome. The protein resides in the centromere. Its subcellular location is the kinetochore. The protein localises to the nucleoplasm. It is found in the nuclear pore complex. In terms of biological role, required for the assembly of a functional nuclear pore complex (NPC) on the surface of chromosomes as nuclei form at the end of mitosis. May initiate NPC assembly by binding to chromatin and recruiting the Nup107-160 subcomplex of the NPC. Also required for the localization of the Nup107-160 subcomplex of the NPC to the kinetochore during mitosis and for the completion of cytokinesis. This is Protein ELYS (AHCTF1) from Homo sapiens (Human).